We begin with the raw amino-acid sequence, 447 residues long: Elongation factor 1-alpha (447 aa).

The region spanning 5–230 (KTHINIVVIG…DQINEPKRPS (226 aa)) is the tr-type G domain. Positions 14–21 (GHVDSGKS) are G1. 14–21 (GHVDSGKS) is a binding site for GTP. Lysine 55 is modified (N6,N6-dimethyllysine). The segment at 70–74 (GITID) is G2. Lysine 79 carries the N6,N6,N6-trimethyllysine modification. The G3 stretch occupies residues 91-94 (DAPG). Residues 91 to 95 (DAPGH) and 153 to 156 (NKMD) each bind GTP. The interval 153-156 (NKMD) is G4. Residue lysine 187 is modified to N6,N6,N6-trimethyllysine. The interval 194-196 (SGF) is G5. An N6-methyllysine modification is found at lysine 261. Glutamate 289 is modified (5-glutamyl glycerylphosphorylethanolamine). N6,N6,N6-trimethyllysine is present on lysine 306. At glutamate 362 the chain carries 5-glutamyl glycerylphosphorylethanolamine. Lysine 396 carries the post-translational modification N6,N6,N6-trimethyllysine.

Belongs to the TRAFAC class translation factor GTPase superfamily. Classic translation factor GTPase family. EF-Tu/EF-1A subfamily.

Its subcellular location is the cytoplasm. This protein promotes the GTP-dependent binding of aminoacyl-tRNA to the A-site of ribosomes during protein biosynthesis. The sequence is that of Elongation factor 1-alpha (REFA1) from Oryza sativa subsp. japonica (Rice).